Reading from the N-terminus, the 799-residue chain is Protein translocase subunit SecA (799 aa).

ATP contacts are provided by residues Gln-85, 103–107, and Asp-504; that span reads GEGKT.

This sequence belongs to the SecA family. In terms of assembly, monomer and homodimer. Part of the essential Sec protein translocation apparatus which comprises SecA, SecYEG and auxiliary proteins SecDF. Other proteins may also be involved.

The protein localises to the cell membrane. Its subcellular location is the cytoplasm. It carries out the reaction ATP + H2O + cellular proteinSide 1 = ADP + phosphate + cellular proteinSide 2.. Its function is as follows. Part of the Sec protein translocase complex. Interacts with the SecYEG preprotein conducting channel. Has a central role in coupling the hydrolysis of ATP to the transfer of proteins into and across the cell membrane, serving as an ATP-driven molecular motor driving the stepwise translocation of polypeptide chains across the membrane. The protein is Protein translocase subunit SecA of Lactobacillus acidophilus (strain ATCC 700396 / NCK56 / N2 / NCFM).